Consider the following 193-residue polypeptide: Ion-translocating oxidoreductase complex subunit A (193 aa).

6 helical membrane passes run 5-25, 39-59, 62-82, 102-122, 134-154, and 171-191; these read LLLL…FLGL, MGMG…AWAV, FILV…LVIA, LLGI…VALL, AVYG…FAAI, and SIAL…SGLV.

Belongs to the NqrDE/RnfAE family. The complex is composed of six subunits: RnfA, RnfB, RnfC, RnfD, RnfE and RnfG.

It is found in the cell inner membrane. Part of a membrane-bound complex that couples electron transfer with translocation of ions across the membrane. This chain is Ion-translocating oxidoreductase complex subunit A, found in Edwardsiella ictaluri (strain 93-146).